The following is a 190-amino-acid chain: NADH dehydrogenase [ubiquinone] iron-sulfur protein 3 (190 aa).

The protein belongs to the complex I 30 kDa subunit family. Complex I is composed of at least 49 different subunits. This is a component of the iron-sulfur (IP) fragment of the enzyme.

Its subcellular location is the mitochondrion inner membrane. It catalyses the reaction a ubiquinone + NADH + 5 H(+)(in) = a ubiquinol + NAD(+) + 4 H(+)(out). Its function is as follows. Core subunit of the mitochondrial membrane respiratory chain NADH dehydrogenase (Complex I) that is believed to belong to the minimal assembly required for catalysis. Complex I functions in the transfer of electrons from NADH to the respiratory chain. The immediate electron acceptor for the enzyme is believed to be ubiquinone. In Arabidopsis thaliana (Mouse-ear cress), this protein is NADH dehydrogenase [ubiquinone] iron-sulfur protein 3 (NAD9).